Reading from the N-terminus, the 261-residue chain is Ribosomal RNA small subunit methyltransferase A (261 aa).

Residues Asn20, Leu22, Gly47, Glu68, Asp90, and Asn110 each contribute to the S-adenosyl-L-methionine site.

The protein belongs to the class I-like SAM-binding methyltransferase superfamily. rRNA adenine N(6)-methyltransferase family. RsmA subfamily.

It localises to the cytoplasm. The enzyme catalyses adenosine(1518)/adenosine(1519) in 16S rRNA + 4 S-adenosyl-L-methionine = N(6)-dimethyladenosine(1518)/N(6)-dimethyladenosine(1519) in 16S rRNA + 4 S-adenosyl-L-homocysteine + 4 H(+). Functionally, specifically dimethylates two adjacent adenosines (A1518 and A1519) in the loop of a conserved hairpin near the 3'-end of 16S rRNA in the 30S particle. May play a critical role in biogenesis of 30S subunits. The polypeptide is Ribosomal RNA small subunit methyltransferase A (Prosthecochloris aestuarii (strain DSM 271 / SK 413)).